We begin with the raw amino-acid sequence, 386 residues long: Cytotoxic granule associated RNA binding protein TIA1 (386 aa).

Position 1 is an N-acetylmethionine (methionine 1). 3 consecutive RRM domains span residues 7 to 83 (KTLY…WATT), 106 to 184 (FHVF…WATR), and 214 to 286 (CTVY…WGKE). A disordered region spans residues 355–376 (GPNYSVPPPQGQNGSMLPSQPA).

In terms of assembly, homooligomer; homooligomerization is induced by Zn(2+). Interacts with FASTK; the interactions leads to its phosphorylation. Interacts (via RRM1 and the C-terminal glutamine-rich (Q) sequence) with SNRPC/U1-C (via N-terminus); thereby facilitating spliceosomal U1 snRNP recruitment to 5' splice sites. Post-translationally, phosphorylatedby FASTK; phosphorylation occurs after FAS ligation in FAS-mediated apoptosis and before DNA fragmentation.

The protein resides in the nucleus. The protein localises to the cytoplasm. It is found in the stress granule. In terms of biological role, RNA-binding protein involved in the regulation of alternative pre-RNA splicing and mRNA translation by binding to uridine-rich (U-rich) RNA sequences. Binds to U-rich sequences immediately downstream from a 5' splice sites in a uridine-rich small nuclear ribonucleoprotein (U snRNP)-dependent fashion, thereby modulating alternative pre-RNA splicing. Preferably binds to the U-rich IAS1 sequence in a U1 snRNP-dependent manner; this binding is optimal if a 5' splice site is adjacent to IAS1. Activates the use of heterologous 5' splice sites; the activation depends on the intron sequence downstream from the 5' splice site, with a preference for a downstream U-rich sequence. By interacting with SNRPC/U1-C, promotes recruitment and binding of spliceosomal U1 snRNP to 5' splice sites followed by U-rich sequences, thereby facilitating atypical 5' splice site recognition by U1 snRNP. Activates splicing of alternative exons with weak 5' splice sites followed by a U-rich stretch on its own pre-mRNA and on TIAR mRNA. Acts as a modulator of alternative splicing for the apoptotic FAS receptor, thereby promoting apoptosis. Binds to the 5' splice site region of FAS intron 5 to promote accumulation of transcripts that include exon 6 at the expense of transcripts in which exon 6 is skipped, thereby leading to the transcription of a membrane-bound apoptotic FAS receptor, which promotes apoptosis. Binds to a conserved AU-rich cis element in COL2A1 intron 2 and modulates alternative splicing of COL2A1 exon 2. Also binds to the equivalent AT-rich element in COL2A1 genomic DNA, and may thereby be involved in the regulation of transcription. Involved in the repression of mRNA translation by binding to AU-rich elements (AREs) located in mRNA 3' untranslated regions (3' UTRs), including target ARE-bearing mRNAs encoding TNF and PTGS2. Also participates in the cellular response to environmental stress, by acting downstream of the stress-induced phosphorylation of EIF2S1/EIF2A to promote the recruitment of untranslated mRNAs to cytoplasmic stress granules (SGs), leading to stress-induced translational arrest. Formation and recruitment to SGs is regulated by Zn(2+). Possesses nucleolytic activity against cytotoxic lymphocyte target cells. The chain is Cytotoxic granule associated RNA binding protein TIA1 (Tia1) from Mus musculus (Mouse).